The following is a 301-amino-acid chain: Nucleotide-binding protein ELI_02120 (301 aa).

12–19 (GMSGAGKS) is an ATP binding site. 62–65 (DSRT) is a binding site for GTP.

Belongs to the RapZ-like family.

In terms of biological role, displays ATPase and GTPase activities. The protein is Nucleotide-binding protein ELI_02120 of Erythrobacter litoralis (strain HTCC2594).